Consider the following 250-residue polypeptide: AA9 family lytic polysaccharide monooxygenase F (250 aa).

The N-terminal stretch at 1-21 is a signal peptide; sequence MAMSKIATLAGLLASAGLVAG. Residue His22 coordinates Cu(2+). Asp51 is a binding site for O2. 2 disulfide bridges follow: Cys77-Cys200 and Cys121-Cys125. Cu(2+) is bound at residue His107. The O2 site is built by His186 and Gln195. Tyr197 lines the Cu(2+) pocket.

Belongs to the glycosyl hydrolase 61 family. Cu(2+) serves as cofactor.

The protein resides in the secreted. It catalyses the reaction Endohydrolysis of (1-&gt;4)-beta-D-glucosidic linkages in cellulose, lichenin and cereal beta-D-glucans.. Its function is as follows. Lytic polysaccharide monooxygenase (LMPO) that depolymerizes crystalline and amorphous polysaccharides via the oxidation of scissile alpha- or beta-(1-4)-glycosidic bonds, yielding C1 or C4 oxidation products. Catalysis by LPMOs requires the reduction of the active-site copper from Cu(II) to Cu(I) by a reducing agent and H(2)O(2) or O(2) as a cosubstrate. Major secreted component of the extracellular cellulolytic system. The sequence is that of AA9 family lytic polysaccharide monooxygenase F from Emericella nidulans (strain FGSC A4 / ATCC 38163 / CBS 112.46 / NRRL 194 / M139) (Aspergillus nidulans).